The chain runs to 142 residues: FAD synthase (142 aa).

Residues 9–10 (TF), 14–17 (HPGH), and aspartate 92 each bind ATP.

The protein belongs to the archaeal FAD synthase family. As to quaternary structure, homodimer. Requires a divalent metal cation as cofactor.

It carries out the reaction FMN + ATP + H(+) = FAD + diphosphate. It participates in cofactor biosynthesis; FAD biosynthesis; FAD from FMN: step 1/1. In terms of biological role, catalyzes the transfer of the AMP portion of ATP to flavin mononucleotide (FMN) to produce flavin adenine dinucleotide (FAD) coenzyme. The protein is FAD synthase of Methanohalophilus mahii (strain ATCC 35705 / DSM 5219 / SLP).